The chain runs to 218 residues: Thiopurine S-methyltransferase (218 aa).

The S-adenosyl-L-methionine site is built by Trp-10, Leu-45, Glu-66, and Arg-123.

This sequence belongs to the class I-like SAM-binding methyltransferase superfamily. TPMT family.

It is found in the cytoplasm. The catalysed reaction is S-adenosyl-L-methionine + a thiopurine = S-adenosyl-L-homocysteine + a thiopurine S-methylether.. In Shewanella baltica (strain OS195), this protein is Thiopurine S-methyltransferase.